Reading from the N-terminus, the 325-residue chain is MAASCVLLHTGQKMPLIGLGTWKSEPGQVKAAVKYALSVGYRHIDCAAIYGNEPEIGEALKEDVGPGKAVPREELFVTSKLWNTKHHPEDVEPALQKTLADLQLEYLDLYLMHWPYAFERGDNPFPKNADGTICYDSTHYKETWKALEALVAKGLVRALGLSNFNSRQIDDILSVASVRPAVLQVECHPYLAQNELIAHCQARGLAVTAYSPLGSSDRAWRDPDEPVLLEEPVVLALAEKYGGSPAQILLRWQVQRKVICIPKSITPSRILQNIKVFDFTFSPEEMKQLNALNKNWRHIVPMLTVDGKRVPRDAGHPLYPFNDPY.

N-acetylalanine is present on A2. A Phosphoserine modification is found at S4. Residues 11 to 20, T21, and W22 each bind NADP(+); that span reads GQKMPLIGLG. Phosphoserine is present on S38. Position 45 (D45) interacts with NADP(+). Catalysis depends on Y50, which acts as the Proton donor. An N6-acetyllysine; alternate modification is found at K127. K127 is modified (N6-succinyllysine; alternate). The residue at position 145 (K145) is an N6-succinyllysine. NADP(+) is bound by residues S162, N163, S211, L213, S215, S216, K263, S264, I265, T266, R269, Q272, and N273. S211 carries the post-translational modification Phosphoserine.

It belongs to the aldo/keto reductase family.

It is found in the cytoplasm. The protein resides in the cytosol. The protein localises to the apical cell membrane. It carries out the reaction a primary alcohol + NADP(+) = an aldehyde + NADPH + H(+). The enzyme catalyses L-gulonate + NADP(+) = aldehydo-D-glucuronate + NADPH + H(+). It catalyses the reaction L-gulono-1,4-lactone + NADP(+) = D-glucurono-3,6-lactone + NADPH + H(+). The catalysed reaction is allyl alcohol + NADP(+) = acrolein + NADPH + H(+). It carries out the reaction glycerol + NADP(+) = D-glyceraldehyde + NADPH + H(+). The enzyme catalyses glycerol + NADP(+) = L-glyceraldehyde + NADPH + H(+). It catalyses the reaction hydroxyacetone + NADP(+) = methylglyoxal + NADPH + H(+). The catalysed reaction is 3-deoxyfructose + NADP(+) = 3-deoxyglucosone + NADPH + H(+). It carries out the reaction (R)-mevalonate + NADP(+) = (R)-mevaldate + NADPH + H(+). The enzyme catalyses pyridine 3-methanol + NADP(+) = pyridine-3-carbaldehyde + NADPH + H(+). It catalyses the reaction S-nitroso-CoA + NADPH + H(+) = sulfinamide-CoA + NADP(+). The catalysed reaction is S-nitrosoglutathione + NADPH + H(+) = S-(hydroxysulfenamide)glutathione + NADP(+). Its function is as follows. Catalyzes the NADPH-dependent reduction of a wide variety of carbonyl-containing compounds to their corresponding alcohols. Displays enzymatic activity towards endogenous metabolites such as aromatic and aliphatic aldehydes, ketones, monosaccharides and bile acids, with a preference for negatively charged substrates, such as glucuronate and succinic semialdehyde. Functions as a detoxifiying enzyme by reducing a range of toxic aldehydes. Reduces methylglyoxal and 3-deoxyglucosone, which are present at elevated levels under hyperglycemic conditions and are cytotoxic. Involved also in the detoxification of lipid-derived aldehydes like acrolein. Plays a role in the activation of procarcinogens, such as polycyclic aromatic hydrocarbon trans-dihydrodiols, and in the metabolism of various xenobiotics and drugs. Also acts as an inhibitor of protein S-nitrosylation by mediating degradation of S-nitroso-coenzyme A (S-nitroso-CoA), a cofactor required to S-nitrosylate proteins. S-nitroso-CoA reductase activity is involved in reprogramming intermediary metabolism in renal proximal tubules, notably by inhibiting protein S-nitrosylation of isoform 2 of PKM (PKM2). Also acts as a S-nitroso-glutathione reductase by catalyzing the NADPH-dependent reduction of S-nitrosoglutathione. Displays no reductase activity towards retinoids. The sequence is that of Aldo-keto reductase family 1 member A1 (AKR1A1) from Pongo abelii (Sumatran orangutan).